A 639-amino-acid polypeptide reads, in one-letter code: Poly(A)-specific ribonuclease PARN (639 aa).

A divalent metal cation is bound by residues D28 and E30. Phosphoserine occurs at positions 163 and 167. Residues 178-245 (KKFIDQVVEK…ERYIVISKVD (68 aa)) enclose the R3H domain. K220 bears the N6-acetyllysine mark. A divalent metal cation contacts are provided by D292 and D382. An N6-acetyllysine modification is found at K499. At S530 the chain carries Phosphoserine. S557 bears the Phosphoserine; by MAPKAPK2 mark. A disordered region spans residues 560-639 (APSTVGKRNL…ATLFEVPDTW (80 aa)). Phosphoserine is present on residues S583 and S587. Residues 606–615 (KKAKKLKRMK) show a composition bias toward basic residues. A phosphoserine mark is found at S619, S623, and S628. Residue T631 is modified to Phosphothreonine.

This sequence belongs to the CAF1 family. Homodimer. Found in a mRNA decay complex with RENT1, RENT2 and RENT3B. Interacts with KHSRP. Interacts with CELF1/CUGBP1. Interacts with ZC3HAV1 in an RNA-independent manner. Interacts with DHX36. The cofactor is Mg(2+). Phosphorylation by MAPKAPK2, preventing GADD45A mRNA degradation after genotoxic stress. As to expression, ubiquitous.

The protein resides in the nucleus. It is found in the cytoplasm. The protein localises to the nucleolus. The enzyme catalyses Exonucleolytic cleavage of poly(A) to 5'-AMP.. Its function is as follows. 3'-exoribonuclease that has a preference for poly(A) tails of mRNAs, thereby efficiently degrading poly(A) tails. Exonucleolytic degradation of the poly(A) tail is often the first step in the decay of eukaryotic mRNAs and is also used to silence certain maternal mRNAs translationally during oocyte maturation and early embryonic development. Interacts with both the 3'-end poly(A) tail and the 5'-end cap structure during degradation, the interaction with the cap structure being required for an efficient degradation of poly(A) tails. Involved in nonsense-mediated mRNA decay, a critical process of selective degradation of mRNAs that contain premature stop codons. Also involved in degradation of inherently unstable mRNAs that contain AU-rich elements (AREs) in their 3'-UTR, possibly via its interaction with KHSRP. Probably mediates the removal of poly(A) tails of AREs mRNAs, which constitutes the first step of destabilization. Also able to recognize and trim poly(A) tails of microRNAs such as MIR21 and H/ACA box snoRNAs (small nucleolar RNAs) leading to microRNAs degradation or snoRNA increased stability. The polypeptide is Poly(A)-specific ribonuclease PARN (PARN) (Homo sapiens (Human)).